A 957-amino-acid polypeptide reads, in one-letter code: UvrABC system protein A (957 aa).

Position 33–40 (33–40 (GLSGSGKS)) interacts with ATP. The C4-type zinc finger occupies 252–279 (CPHCGFSIGELEPRLFSFNSPFGACPTC). ABC transporter domains lie at 309 to 587 (WTPI…PNSL) and 607 to 935 (PDGR…RYLK). An ATP-binding site is contributed by 639–646 (GVSGSGKS). Residues 738–764 (CEACRGDGIIKIEMHFLPDVYVPCEVC) form a C4-type zinc finger.

Belongs to the ABC transporter superfamily. UvrA family. As to quaternary structure, forms a heterotetramer with UvrB during the search for lesions.

Its subcellular location is the cytoplasm. The UvrABC repair system catalyzes the recognition and processing of DNA lesions. UvrA is an ATPase and a DNA-binding protein. A damage recognition complex composed of 2 UvrA and 2 UvrB subunits scans DNA for abnormalities. When the presence of a lesion has been verified by UvrB, the UvrA molecules dissociate. The chain is UvrABC system protein A from Bacillus subtilis (strain 168).